A 962-amino-acid chain; its full sequence is Leucine--tRNA ligase (962 aa).

Residues 41–51 carry the 'HIGH' region motif; it reads PYLNGNLHAGH. Residues 631–635 carry the 'KMSKS' region motif; the sequence is KMSKS. Lysine 634 is an ATP binding site.

It belongs to the class-I aminoacyl-tRNA synthetase family.

The protein resides in the cytoplasm. It catalyses the reaction tRNA(Leu) + L-leucine + ATP = L-leucyl-tRNA(Leu) + AMP + diphosphate. In Methanococcoides burtonii (strain DSM 6242 / NBRC 107633 / OCM 468 / ACE-M), this protein is Leucine--tRNA ligase.